We begin with the raw amino-acid sequence, 101 residues long: MDPNMMIVKTLSETDCSHDNKLILPRDKVENIVRSTGVPVPRMGIQVEILDNTNSYWVNLRQSQRGYFIGRGWGELRDARNLKAGDVIKLYWQNTKFIFSM.

The segment at residues 7 to 101 is a DNA-binding region (TF-B3); that stretch reads IVKTLSETDC…WQNTKFIFSM (95 aa).

Its subcellular location is the nucleus. The sequence is that of B3 domain-containing protein At1g08985 from Arabidopsis thaliana (Mouse-ear cress).